Here is a 314-residue protein sequence, read N- to C-terminus: DNA-directed RNA polymerase subunit alpha (314 aa).

The tract at residues 1-228 (MIEIEKPRIE…EHLNIFVGLT (228 aa)) is alpha N-terminal domain (alpha-NTD). Residues 245-314 (KEKVLEMSIE…DLGLGLRKED (70 aa)) are alpha C-terminal domain (alpha-CTD).

Belongs to the RNA polymerase alpha chain family. As to quaternary structure, homodimer. The RNAP catalytic core consists of 2 alpha, 1 beta, 1 beta' and 1 omega subunit. When a sigma factor is associated with the core the holoenzyme is formed, which can initiate transcription.

It carries out the reaction RNA(n) + a ribonucleoside 5'-triphosphate = RNA(n+1) + diphosphate. Functionally, DNA-dependent RNA polymerase catalyzes the transcription of DNA into RNA using the four ribonucleoside triphosphates as substrates. The protein is DNA-directed RNA polymerase subunit alpha of Staphylococcus saprophyticus subsp. saprophyticus (strain ATCC 15305 / DSM 20229 / NCIMB 8711 / NCTC 7292 / S-41).